We begin with the raw amino-acid sequence, 476 residues long: MNFKSTIGLEVHFELKTKSKIFSPSPVTYGAEANTETNVIDWAMPGVLPRLNKDVYRLGIMVALATHSHILPVTHFDRKNYFYPDNPKAYQITQFFQPLARDGYIEVEVRGKKKRIGIHEMHIEEDAGKNTHGANGYSYVDLNRQGVPLLEVVSEPDMEDPEEAYAYLTKLRQIVQFTGASDVKMEEGSMRVDTNISIRPAGQEKLGTKVEMKNLNSFDHVRRSLAYEEKRQQQVLLSGGRVQLSTRRFDEATGKTVLERVKEGDADYRYFPEPDIAPYHIKQSWIDEIAESLPESPFERRKRYVKEYGIKEYDADVILQTKESSDFYDAAVAAGADPTLAANWLNTQVNGYLNENQVGIADIKLTPEHLAEMIKMIKDGTISSKIAKKVFKESIENGTDPKKYVEDKGMVQLSDVSVLGPMVTKVVDDNPQSVEDFKNGKDRAIGFLVGQIMKQTRGKANPKVVNQLLNKELQSR.

The protein belongs to the GatB/GatE family. GatB subfamily. Heterotrimer of A, B and C subunits.

The enzyme catalyses L-glutamyl-tRNA(Gln) + L-glutamine + ATP + H2O = L-glutaminyl-tRNA(Gln) + L-glutamate + ADP + phosphate + H(+). It catalyses the reaction L-aspartyl-tRNA(Asn) + L-glutamine + ATP + H2O = L-asparaginyl-tRNA(Asn) + L-glutamate + ADP + phosphate + 2 H(+). Functionally, allows the formation of correctly charged Asn-tRNA(Asn) or Gln-tRNA(Gln) through the transamidation of misacylated Asp-tRNA(Asn) or Glu-tRNA(Gln) in organisms which lack either or both of asparaginyl-tRNA or glutaminyl-tRNA synthetases. The reaction takes place in the presence of glutamine and ATP through an activated phospho-Asp-tRNA(Asn) or phospho-Glu-tRNA(Gln). This is Aspartyl/glutamyl-tRNA(Asn/Gln) amidotransferase subunit B from Lactobacillus gasseri (strain ATCC 33323 / DSM 20243 / BCRC 14619 / CIP 102991 / JCM 1131 / KCTC 3163 / NCIMB 11718 / NCTC 13722 / AM63).